An 876-amino-acid chain; its full sequence is DDB1- and CUL4-associated factor 6 (876 aa).

5 WD repeats span residues 49 to 88 (VHDG…VLTT), 92 to 133 (GHRA…ETNR), 139 to 179 (CHYG…SCTK), 189 to 229 (NCRR…TRAT), and 251 to 290 (NKSC…AREL). 2 stretches are compositionally biased toward basic and acidic residues: residues 288–303 (RELK…EELR) and 312–334 (LRGD…RDGE). Disordered regions lie at residues 288 to 340 (RELK…PNVS), 355 to 391 (EASE…SSPN), 408 to 485 (LQPS…TEGT), 498 to 645 (WSST…NPEL), and 658 to 691 (EDPS…GPGD). Serine 336 is modified (phosphoserine). Polar residues-rich tracts occupy residues 375 to 391 (TNQP…SSPN) and 409 to 422 (QPST…QAQA). Residues 456–466 (HQSDNSNERLS) are compositionally biased toward basic and acidic residues. Low complexity predominate over residues 499-510 (SSTASSSRGNGS). Over residues 534-544 (SETRAPEELSE) the composition is skewed to basic and acidic residues. Polar residues-rich tracts occupy residues 550–562 (ENLT…TAQL), 571–584 (DSNS…SQDS), 603–613 (EQASTESATRH), and 621–645 (PSQT…NPEL). A Phosphoserine modification is found at serine 665. Residue threonine 670 is modified to Phosphothreonine. Serine 673 is subject to Phosphoserine. The region spanning 692-721 (RRSAVARIQEFFRRRKERKEMEELDTLNIR) is the IQ domain. WD repeat units follow at residues 734–772 (NSRT…HLML) and 775–814 (ADNH…RIFN). A phosphoserine mark is found at serine 863 and serine 866.

As to quaternary structure, interacts with the nuclear receptors NR3C1 and AR in the presence of ligand. Interacts with DDB1, CUL4A and CUL4B.

The protein localises to the nucleus. The protein operates within protein modification; protein ubiquitination. In terms of biological role, ligand-dependent coactivator of nuclear receptors. Enhance transcriptional activity of the nuclear receptors NR3C1 and AR. May function as a substrate receptor for CUL4-DDB1 E3 ubiquitin-protein ligase complex. The chain is DDB1- and CUL4-associated factor 6 (Dcaf6) from Mus musculus (Mouse).